Here is a 711-residue protein sequence, read N- to C-terminus: MATVLTTAIDVCFNPQNSDTKKHSLFLKPSLFRQSRSRKLNISCSSLKQPKTLEEEPITTKTPSLSEQLKPLSATTLRQEQTQILSKPKSVWVNPTRPKRSVLSLQRQKRSAYSYNPQIKDLRAFALKLNSSIFTEKSEFLSLLDEIPHPPNRDNALLVLNSLREWQKTHTFFNWVKSKSLFPMETIFYNVTMKSLRFGRQFQLIEEMALEMVKDGVELDNITYSTIITCAKRCNLYNKAIEWFERMYKTGLMPDEVTYSAILDVYSKSGKVEEVLSLYERAVATGWKPDAIAFSVLGKMFGEAGDYDGIRYVLQEMKSMDVKPNVVVYNTLLEAMGRAGKPGLARSLFNEMLEAGLTPNEKTLTALVKIYGKARWARDALQLWEEMKAKKWPMDFILYNTLLNMCADIGLEEEAERLFNDMKESVQCRPDNFSYTAMLNIYGSGGKAEKAMELFEEMLKAGVQVNVMGCTCLVQCLGKAKRIDDVVYVFDLSIKRGVKPDDRLCGCLLSVMALCESSEDAEKVMACLERANKKLVTFVNLIVDEKTEYETVKEEFKLVINATQVEARRPFCNCLIDICRGNNRHERAHELLYLGTLFGLYPGLHNKTIKEWSLDVRSLSVGAAETALEEWMRTLANIIKRQEELPELFLAQTGTGTHRFSQGLANSFALHLQQLSAPFRQSDRPGIFVATKEDLVSWLESKFPPLVTSQA.

The transit peptide at 1-43 directs the protein to the chloroplast; the sequence is MATVLTTAIDVCFNPQNSDTKKHSLFLKPSLFRQSRSRKLNIS. PPR repeat units follow at residues 185–219, 220–254, 255–289, 290–324, 325–359, 360–394, 395–425, 431–465, 466–500, and 501–535; these read ETIF…GVEL, DNIT…GLMP, DEVT…GWKP, DAIA…DVKP, NVVV…GLTP, NEKT…KWPM, DFIL…MKES, DNFS…GVQV, NVMG…GVKP, and DDRL…NKKL. Residues 614–696 form the Smr domain; that stretch reads LDVRSLSVGA…IFVATKEDLV (83 aa).

This sequence belongs to the PPR family. P subfamily.

It is found in the plastid. It localises to the chloroplast. This Arabidopsis thaliana (Mouse-ear cress) protein is Pentatricopeptide repeat-containing protein At5g46580, chloroplastic.